The sequence spans 700 residues: Elongation factor G (700 aa).

Residues serine 10–leucine 286 enclose the tr-type G domain. Residues alanine 19–threonine 26, aspartate 83–histidine 87, and asparagine 137–aspartate 140 contribute to the GTP site.

It belongs to the TRAFAC class translation factor GTPase superfamily. Classic translation factor GTPase family. EF-G/EF-2 subfamily.

The protein localises to the cytoplasm. Its function is as follows. Catalyzes the GTP-dependent ribosomal translocation step during translation elongation. During this step, the ribosome changes from the pre-translocational (PRE) to the post-translocational (POST) state as the newly formed A-site-bound peptidyl-tRNA and P-site-bound deacylated tRNA move to the P and E sites, respectively. Catalyzes the coordinated movement of the two tRNA molecules, the mRNA and conformational changes in the ribosome. The protein is Elongation factor G of Mycolicibacterium gilvum (strain PYR-GCK) (Mycobacterium gilvum (strain PYR-GCK)).